A 296-amino-acid chain; its full sequence is MEKIQQAYLYMLKVEKQFSEHTLKSYHDDLEQFNVFLAQEHLDLNAFEYKDARNYLSYLYSKNLKRTSVSRKISTLRSFYEYWMTQDEAVVNPFIQLVHPKKEHYLPHFFYEEEMEALFDTVENDAKKGLRDRVILELLYSTGIRVSELVHIKEQDIDMTSPGVKVLGKGGKERFIPFGEFCKQSMERYLASFKPKLNSNHDYLLVNMKGDPITERGVRYVLNDVVKRTAGVTEIHPHKLRHTFATHMLNQGADLRTVQSLLGHVNLSTTGRYTHVTNEQLRKVYLNAHPRAKKEN.

One can recognise a Core-binding (CB) domain in the interval 1-84 (MEKIQQAYLY…TLRSFYEYWM (84 aa)). Residues 105–286 (YLPHFFYEEE…TNEQLRKVYL (182 aa)) form the Tyr recombinase domain. Residues Arg145, Lys169, His238, Arg241, and His264 contribute to the active site. The active-site O-(3'-phospho-DNA)-tyrosine intermediate is the Tyr273.

This sequence belongs to the 'phage' integrase family. XerC subfamily. As to quaternary structure, forms a cyclic heterotetrameric complex composed of two molecules of XerC and two molecules of XerD.

It localises to the cytoplasm. Its function is as follows. Site-specific tyrosine recombinase, which acts by catalyzing the cutting and rejoining of the recombining DNA molecules. The XerC-XerD complex is essential to convert dimers of the bacterial chromosome into monomers to permit their segregation at cell division. It also contributes to the segregational stability of plasmids. This chain is Tyrosine recombinase XerC, found in Staphylococcus saprophyticus subsp. saprophyticus (strain ATCC 15305 / DSM 20229 / NCIMB 8711 / NCTC 7292 / S-41).